Consider the following 284-residue polypeptide: Tropomyosin (284 aa).

A coiled-coil region spans residues 1 to 284; that stretch reads MDAIKKKMVA…DATFAELAGY (284 aa). The span at 32 to 41 shows a compositional bias: basic and acidic residues; that stretch reads TEEAKAKIED. The disordered stretch occupies residues 32–60; the sequence is TEEAKAKIEDDYNSLQKKSIQTENDLDNT. A compositionally biased stretch (polar residues) spans 44-60; the sequence is NSLQKKSIQTENDLDNT.

It belongs to the tropomyosin family. Homodimer.

Functionally, tropomyosin, in association with the troponin complex, plays a central role in the calcium dependent regulation of muscle contraction. The chain is Tropomyosin from Mytilus edulis (Blue mussel).